Consider the following 856-residue polypeptide: Protein phosphatase 2C 32 (856 aa).

Phosphoserine is present on residues serine 152, serine 189, and serine 201. A PPM-type phosphatase domain is found at 269 to 835; sequence ESCLESNRNL…DDVSVMVVSL (567 aa). Mn(2+)-binding residues include aspartate 307 and glycine 308. Disordered stretches follow at residues 340 to 373, 388 to 407, and 446 to 485; these read PSEDNQLQPDQEPPTEENMCDPESISEQHSKSVV, GNTDTQIADGPPGDSAGPGK, and NPSTSGGGAGNDPCTTDRSALDGIPNSGQRHGTKKSQISS. Positions 395-407 are enriched in low complexity; it reads ADGPPGDSAGPGK. Residues 471-485 show a composition bias toward polar residues; the sequence is NSGQRHGTKKSQISS. 2 residues coordinate Mn(2+): aspartate 763 and aspartate 826.

Belongs to the PP2C family. It depends on Mg(2+) as a cofactor. Mn(2+) serves as cofactor. In terms of tissue distribution, expressed in roots, leaves, stems, inflorescences, flowers and throughout the shoot meristem.

It localises to the nucleus. It carries out the reaction O-phospho-L-seryl-[protein] + H2O = L-seryl-[protein] + phosphate. The catalysed reaction is O-phospho-L-threonyl-[protein] + H2O = L-threonyl-[protein] + phosphate. Its activity is regulated as follows. Insensitive to okadaic acid. Functionally, involved in the regulation of pedicel length and of CLAVATA pathways controlling stem cell identity at shoot and flower meristems. The polypeptide is Protein phosphatase 2C 32 (POL) (Arabidopsis thaliana (Mouse-ear cress)).